A 165-amino-acid polypeptide reads, in one-letter code: Chemotaxis protein CheW (165 aa).

The protein belongs to the CheW family.

In terms of biological role, plays an essential role in chemotaxis signal transduction system in order to colonize the host stomach. The sequence is that of Chemotaxis protein CheW from Helicobacter pylori (strain ATCC 700392 / 26695) (Campylobacter pylori).